The primary structure comprises 385 residues: Meiotic recombination protein SPO11-2 (385 aa).

The 146-residue stretch at 24–169 (LPPAEVRARI…LGIMASSRGA (146 aa)) folds into the Topo IIA-type catalytic domain. Catalysis depends on Tyr-126, which acts as the O-(5'-phospho-DNA)-tyrosine intermediate. Glu-219 and Asp-272 together coordinate Mg(2+).

It belongs to the TOP6A family. In terms of assembly, interacts with TOP6B. Mg(2+) serves as cofactor. Highly expressed in flowers before pollination. Expressed in roots and shoots.

The protein resides in the nucleus. The enzyme catalyses ATP-dependent breakage, passage and rejoining of double-stranded DNA.. Its function is as follows. Required for meiotic recombination. Mediates DNA cleavage that forms the double-strand breaks (DSB) that initiate meiotic recombination. This is Meiotic recombination protein SPO11-2 (SPO11-2) from Oryza sativa subsp. indica (Rice).